Reading from the N-terminus, the 360-residue chain is DNA replication and repair protein RecF (360 aa).

Position 30–37 (30–37 (GQNGSGKT)) interacts with ATP.

It belongs to the RecF family.

The protein localises to the cytoplasm. Functionally, the RecF protein is involved in DNA metabolism; it is required for DNA replication and normal SOS inducibility. RecF binds preferentially to single-stranded, linear DNA. It also seems to bind ATP. The chain is DNA replication and repair protein RecF from Shewanella baltica (strain OS155 / ATCC BAA-1091).